Consider the following 503-residue polypeptide: Maturase K (503 aa).

It belongs to the intron maturase 2 family. MatK subfamily.

The protein resides in the plastid. It is found in the chloroplast. In terms of biological role, usually encoded in the trnK tRNA gene intron. Probably assists in splicing its own and other chloroplast group II introns. The protein is Maturase K of Panax quinquefolius (American ginseng).